An 822-amino-acid polypeptide reads, in one-letter code: MEVFGDNKMFYMRDTWREGTMICDVLPINPSSNGVWPQQKFSDPNINVHFWNYAFPHLQMIFLIISFLWQFLHFFLRRLGMIRFTSHMLTGVLLSKSFLKENSAARRFFSTEDYKEIVFSLTAACSYMMFWFLMGVKMDTGLIRTTGRKAITIGLSSVLLSTLVCSVIFFGNLRDVGTKNSDHTLNSLEYVVIYSIQCLSSFPVVGNLLFELRLQNSELGRLAISSAVISDFSTSILASVLIFMKELKDEQTRLGSVFIGDVIAGNRPLMRAGIVVLFVCIAIYVFRPLMFYIIKQTPSGRPVKAIYLSTIIVMVSGSAILANWCKQSIFMGPFILGLAVPHGPPLGSAIIQKYESAIFGTFLPFFIASSSTEIDISALFGWEGLNGIILIMVTSFVVKFIFTTVPALFYGMPMEDCFALSLIMSFKGIFELGAYALAYQRGSVRPETFTVACLYITLNSAIIPPILRYLYDPSRMYAGYEKRNMQHLKPNSELRILSCIYRTDDISPMINLLEAICPSRESPVATYVLHLMELVGQANPIFISHKLQTRRTEETSYSNNVLVSFEKFRKDFYGSVFVSTYTALSMPDTMHGDICMLALNNTTSLILLPFHQTWSADGSALISNNNMIRNLNKSVLDVAPCSVGVFVYRSSSGRKNISSGRKTINGTVPNLSSYNICMIFLGGKDDREAVTLATRMARDPRINITIVRLITTDEKARENTVWDKMLDDELLRDVKSNTLVDIFYSEKAIEDAAETSSLLRSMVSDFDMFIVGRGNGRTSVFTEGLEEWSEFKELGIIGDLLTSQDFNCQASVLVIQQQQLMI.

12 helical membrane-spanning segments follow: residues 55 to 75 (FPHL…LHFF), 116 to 136 (EIVF…LMGV), 150 to 170 (AITI…VIFF), 190 to 210 (YVVI…NLLF), 224 to 244 (ISSA…LIFM), 274 to 294 (IVVL…FYII), 305 to 325 (AIYL…ANWC), 331 to 351 (MGPF…SAII), 362 to 382 (FLPF…LFGW), 388 to 408 (IILI…VPAL), 418 to 438 (FALS…YALA), and 447 to 467 (ETFT…PPIL).

It belongs to the monovalent cation:proton antiporter 2 (CPA2) transporter (TC 2.A.37) family. CHX (TC 2.A.37.4) subfamily.

The protein localises to the membrane. Functionally, may operate as a cation/H(+) antiporter. This is Cation/H(+) antiporter 3 (CHX3) from Arabidopsis thaliana (Mouse-ear cress).